We begin with the raw amino-acid sequence, 195 residues long: Pyridoxal 5'-phosphate synthase subunit PdxT (195 aa).

L-glutamine is bound at residue 53 to 55; that stretch reads GES. The active-site Nucleophile is the Cys-82. Residues Arg-108 and 134–135 contribute to the L-glutamine site; that span reads IR. Active-site charge relay system residues include His-173 and Glu-175.

Belongs to the glutaminase PdxT/SNO family. As to quaternary structure, in the presence of PdxS, forms a dodecamer of heterodimers. Only shows activity in the heterodimer.

It catalyses the reaction aldehydo-D-ribose 5-phosphate + D-glyceraldehyde 3-phosphate + L-glutamine = pyridoxal 5'-phosphate + L-glutamate + phosphate + 3 H2O + H(+). The catalysed reaction is L-glutamine + H2O = L-glutamate + NH4(+). The protein operates within cofactor biosynthesis; pyridoxal 5'-phosphate biosynthesis. In terms of biological role, catalyzes the hydrolysis of glutamine to glutamate and ammonia as part of the biosynthesis of pyridoxal 5'-phosphate. The resulting ammonia molecule is channeled to the active site of PdxS. The sequence is that of Pyridoxal 5'-phosphate synthase subunit PdxT from Methanobrevibacter smithii (strain ATCC 35061 / DSM 861 / OCM 144 / PS).